Consider the following 318-residue polypeptide: Aspartate carbamoyltransferase catalytic subunit (318 aa).

Positions 59 and 60 each coordinate carbamoyl phosphate. Lys87 serves as a coordination point for L-aspartate. The carbamoyl phosphate site is built by Arg109, His137, and Gln140. 2 residues coordinate L-aspartate: Arg170 and Arg224. Positions 265 and 266 each coordinate carbamoyl phosphate.

It belongs to the aspartate/ornithine carbamoyltransferase superfamily. ATCase family. As to quaternary structure, heterododecamer (2C3:3R2) of six catalytic PyrB chains organized as two trimers (C3), and six regulatory PyrI chains organized as three dimers (R2).

The enzyme catalyses carbamoyl phosphate + L-aspartate = N-carbamoyl-L-aspartate + phosphate + H(+). Its pathway is pyrimidine metabolism; UMP biosynthesis via de novo pathway; (S)-dihydroorotate from bicarbonate: step 2/3. Its function is as follows. Catalyzes the condensation of carbamoyl phosphate and aspartate to form carbamoyl aspartate and inorganic phosphate, the committed step in the de novo pyrimidine nucleotide biosynthesis pathway. This chain is Aspartate carbamoyltransferase catalytic subunit, found in Rhizobium etli (strain CIAT 652).